Here is a 181-residue protein sequence, read N- to C-terminus: HGPRTase-like protein 2 (181 aa).

The protein belongs to the purine/pyrimidine phosphoribosyltransferase family. Archaeal HPRT subfamily.

Functionally, may catalyze a purine salvage reaction, the substrate is unknown. The protein is HGPRTase-like protein 2 of Natrialba magadii (strain ATCC 43099 / DSM 3394 / CCM 3739 / CIP 104546 / IAM 13178 / JCM 8861 / NBRC 102185 / NCIMB 2190 / MS3) (Natronobacterium magadii).